The following is a 214-amino-acid chain: Adenylate kinase (214 aa).

10 to 15 is a binding site for ATP; the sequence is GAGKGT. The tract at residues 30–59 is NMP; the sequence is STGDMLRAAVKAGSELGKQAKAIMDAGKLV. AMP-binding positions include threonine 31, arginine 36, 57 to 59, 85 to 88, and glutamine 92; these read KLV and GFPR. The interval 122–159 is LID; the sequence is GRRVHPGSGRVYHVKFNPPQVEGKDDVTGEDLMTRKDD. ATP is bound by residues arginine 123 and 132 to 133; that span reads VY. AMP contacts are provided by arginine 156 and arginine 167. Residue glutamine 200 participates in ATP binding.

The protein belongs to the adenylate kinase family. Monomer.

Its subcellular location is the cytoplasm. The catalysed reaction is AMP + ATP = 2 ADP. It functions in the pathway purine metabolism; AMP biosynthesis via salvage pathway; AMP from ADP: step 1/1. Its function is as follows. Catalyzes the reversible transfer of the terminal phosphate group between ATP and AMP. Plays an important role in cellular energy homeostasis and in adenine nucleotide metabolism. This chain is Adenylate kinase, found in Edwardsiella ictaluri (strain 93-146).